The sequence spans 492 residues: Cytochrome P450 monooxygenase MYCFIDRAFT_204672 (492 aa).

Asn-116 carries an N-linked (GlcNAc...) asparagine glycan. A helical membrane pass occupies residues 269–293; sequence FLISMIFISAANGCVVSGAMLYSIA. Residue Asn-335 is glycosylated (N-linked (GlcNAc...) asparagine). Residue Cys-430 participates in heme binding.

This sequence belongs to the cytochrome P450 family. The cofactor is heme.

It localises to the membrane. It participates in secondary metabolite biosynthesis. Its function is as follows. Cytochrome P450 monooxygenase; part of the gene cluster that mediates the biosynthesis of an emodin derivative that may be involved in black Sigatoka disease of banana. The pathway begins with the synthesis of atrochrysone thioester by the polyketide synthase PKS8-1. The atrochrysone carboxyl ACP thioesterase MYCFIDRAFT_190111 then breaks the thioester bond and releases the atrochrysone carboxylic acid from PKS8-1. The decarboxylase MYCFIDRAFT_34057 then catalyzes the concerted decarboxylation-elimination required to convert atochrysone carboxylic acid into emodin anthrone, which is further oxidized to emodin by the anthrone oxygenase MYCFIDRAFT_34418. The functions of the other tailoring enzymes as well as the final product of the cluster have still to be identified. The protein is Cytochrome P450 monooxygenase MYCFIDRAFT_204672 of Pseudocercospora fijiensis (strain CIRAD86) (Black leaf streak disease fungus).